The primary structure comprises 356 residues: Probable cinnamyl alcohol dehydrogenase (356 aa).

C47 lines the Zn(2+) pocket. S49 provides a ligand contact to NADP(+). Residues H69, E70, C100, C103, C106, C114, and C163 each coordinate Zn(2+). NADP(+) is bound by residues T167, 188–193 (GLGGVG), 211–216 (SSSDKK), T251, G275, and 298–300 (SFI).

Belongs to the zinc-containing alcohol dehydrogenase family. As to quaternary structure, homodimer. Zn(2+) is required as a cofactor.

It carries out the reaction (E)-cinnamyl alcohol + NADP(+) = (E)-cinnamaldehyde + NADPH + H(+). It catalyses the reaction (E)-coniferol + NADP(+) = (E)-coniferaldehyde + NADPH + H(+). The enzyme catalyses (E)-sinapyl alcohol + NADP(+) = (E)-sinapaldehyde + NADPH + H(+). The catalysed reaction is (E)-4-coumaroyl alcohol + NADP(+) = (E)-4-coumaraldehyde + NADPH + H(+). It carries out the reaction (E)-caffeyl alcohol + NADP(+) = (E)-caffeyl aldehyde + NADPH + H(+). It functions in the pathway aromatic compound metabolism; phenylpropanoid biosynthesis. In terms of biological role, involved in lignin biosynthesis. Catalyzes the final step specific for the production of lignin monomers. Catalyzes the NADPH-dependent reduction of coniferaldehyde, 5-hydroxyconiferaldehyde, sinapaldehyde, 4-coumaraldehyde and caffeyl aldehyde to their respective alcohols. This Eucalyptus globulus (Tasmanian blue gum) protein is Probable cinnamyl alcohol dehydrogenase (CAD).